Reading from the N-terminus, the 629-residue chain is ATP-dependent RNA helicase DBP6 (629 aa).

Positions 1–129 are disordered; the sequence is MFASRFDPSQ…GIEDEAASTH (129 aa). The span at 72 to 84 shows a compositional bias: acidic residues; that stretch reads ASEEDSSEVEEEE. Residues Ser-73, Ser-77, and Ser-78 each carry the phosphoserine modification. The segment covering 88–103 has biased composition (polar residues); the sequence is STHSTVLSRFKQTVSL. The segment covering 116–125 has biased composition (acidic residues); that stretch reads KEDEGIEDEA. The Q motif signature appears at 197–205; sequence TFPIQSIIL. The Helicase ATP-binding domain maps to 221-401; the sequence is RNFTRRIGDI…GLNLYKPKLF (181 aa). 234–241 lines the ATP pocket; the sequence is AATGSGKT. Positions 341–344 match the DEAD box motif; that stretch reads DEAD. A Helicase C-terminal domain is found at 437–603; it reads SICQFMAHSP…SVQPLELDFT (167 aa).

The protein belongs to the DEAD box helicase family. DDX51/DBP6 subfamily. In terms of assembly, associated with pre-ribosomal particles. Interacts with DBP9 and RSA3. Together with NOP8, URB1, URB2 and RSA3, forms an RNA-independent complex, which is required during early maturation of nascent 60S ribosomal subunits.

The protein resides in the nucleus. It is found in the nucleolus. It carries out the reaction ATP + H2O = ADP + phosphate + H(+). Its function is as follows. ATP-binding RNA helicase involved in the biogenesis of 60S ribosomal subunits and is required for the normal formation of 25S and 5.8S rRNAs. This is ATP-dependent RNA helicase DBP6 (DBP6) from Saccharomyces cerevisiae (strain ATCC 204508 / S288c) (Baker's yeast).